A 317-amino-acid polypeptide reads, in one-letter code: Acetyl-coenzyme A carboxylase carboxyl transferase subunit alpha (317 aa).

Residues 40–293 enclose the CoA carboxyltransferase C-terminal domain; it reads LEKRSADALK…GDIIAASLRS (254 aa).

It belongs to the AccA family. In terms of assembly, acetyl-CoA carboxylase is a heterohexamer composed of biotin carboxyl carrier protein (AccB), biotin carboxylase (AccC) and two subunits each of ACCase subunit alpha (AccA) and ACCase subunit beta (AccD).

Its subcellular location is the cytoplasm. The catalysed reaction is N(6)-carboxybiotinyl-L-lysyl-[protein] + acetyl-CoA = N(6)-biotinyl-L-lysyl-[protein] + malonyl-CoA. It participates in lipid metabolism; malonyl-CoA biosynthesis; malonyl-CoA from acetyl-CoA: step 1/1. Its function is as follows. Component of the acetyl coenzyme A carboxylase (ACC) complex. First, biotin carboxylase catalyzes the carboxylation of biotin on its carrier protein (BCCP) and then the CO(2) group is transferred by the carboxyltransferase to acetyl-CoA to form malonyl-CoA. The chain is Acetyl-coenzyme A carboxylase carboxyl transferase subunit alpha from Brucella canis (strain ATCC 23365 / NCTC 10854 / RM-666).